Consider the following 1770-residue polypeptide: U3 small nucleolar RNA-associated protein 10 (1770 aa).

The next 2 membrane-spanning stretches (helical) occupy residues 499–519 (ILGL…FLSS) and 528–548 (LTFL…RLLA). The HEAT repeat unit spans residues 1730-1768 (MVPIIAELLEDDNEEVESEVRGGLVRVMENVLGEPFDRY).

It belongs to the HEATR1/UTP10 family. As to quaternary structure, component of the ribosomal small subunit (SSU) processome.

Its subcellular location is the nucleus. The protein localises to the nucleolus. The protein resides in the membrane. Its function is as follows. Involved in nucleolar processing of pre-18S ribosomal RNA. Involved in ribosome biosynthesis. This chain is U3 small nucleolar RNA-associated protein 10, found in Candida glabrata (strain ATCC 2001 / BCRC 20586 / JCM 3761 / NBRC 0622 / NRRL Y-65 / CBS 138) (Yeast).